The chain runs to 137 residues: Nucleoside diphosphate kinase (137 aa).

ATP-binding residues include lysine 9, phenylalanine 57, arginine 85, threonine 91, arginine 102, and asparagine 112. The Pros-phosphohistidine intermediate role is filled by histidine 115.

It belongs to the NDK family. Homotetramer. It depends on Mg(2+) as a cofactor.

It localises to the cytoplasm. The catalysed reaction is a 2'-deoxyribonucleoside 5'-diphosphate + ATP = a 2'-deoxyribonucleoside 5'-triphosphate + ADP. The enzyme catalyses a ribonucleoside 5'-diphosphate + ATP = a ribonucleoside 5'-triphosphate + ADP. Its function is as follows. Major role in the synthesis of nucleoside triphosphates other than ATP. The ATP gamma phosphate is transferred to the NDP beta phosphate via a ping-pong mechanism, using a phosphorylated active-site intermediate. The polypeptide is Nucleoside diphosphate kinase (Pelobacter propionicus (strain DSM 2379 / NBRC 103807 / OttBd1)).